Consider the following 396-residue polypeptide: E3 ubiquitin-protein transferase MAEA (396 aa).

The segment at 1-124 (MAVQESAVQL…AAASVWKRKR (124 aa)) is extracellular and involved in cell to cell contact. At T28 the chain carries Phosphothreonine. A LisH domain is found at 121 to 153 (KRKRMDRMMVEHLLRCGYYNTAVKLARQSGIED). One can recognise a CTLH domain in the interval 159 to 216 (MFLTAKEVEESLERRETATCLAWCHDNKSRLRKMKSCLEFSLRIQEFIELIRQNKRLD). Residues 314 to 381 (CPVCSRSLNK…QDDKVVCPRT (68 aa)) form an RING-Gid-type zinc finger.

Identified in the CTLH complex that contains GID4, RANBP9 and/or RANBP10, MKLN1, MAEA, RMND5A (or alternatively its paralog RMND5B), GID8, ARMC8, WDR26 and YPEL5. Within this complex, MAEA, RMND5A (or alternatively its paralog RMND5B), GID8, WDR26, and RANBP9 and/or RANBP10 form the catalytic core, while GID4, MKLN1, ARMC8 and YPEL5 have ancillary roles. Interacts with F-actin. In terms of processing, autoubiquitinated as component of the CTLH E3 ubiquitin-protein ligase complex (in vitro).

Its subcellular location is the cytoplasm. The protein resides in the nucleus. It is found in the nucleoplasm. The protein localises to the nucleus matrix. It localises to the cell membrane. Its subcellular location is the cytoskeleton. The enzyme catalyses S-ubiquitinyl-[E2 ubiquitin-conjugating enzyme]-L-cysteine + [acceptor protein]-L-lysine = [E2 ubiquitin-conjugating enzyme]-L-cysteine + N(6)-ubiquitinyl-[acceptor protein]-L-lysine.. Its function is as follows. Core component of the CTLH E3 ubiquitin-protein ligase complex that selectively accepts ubiquitin from UBE2H and mediates ubiquitination and subsequent proteasomal degradation of the transcription factor HBP1. MAEA and RMND5A are both required for catalytic activity of the CTLH E3 ubiquitin-protein ligase complex. MAEA is required for normal cell proliferation. The CTLH E3 ubiquitin-protein ligase complex is not required for the degradation of enzymes involved in gluconeogenesis, such as FBP1. Plays a role in erythroblast enucleation during erythrocyte maturation and in the development of mature macrophages. Mediates the attachment of erythroid cell to mature macrophages; this MAEA-mediated contact inhibits erythroid cell apoptosis. Participates in erythroblastic island formation, which is the functional unit of definitive erythropoiesis. Associates with F-actin to regulate actin distribution in erythroblasts and macrophages. May contribute to nuclear architecture and cells division events. The polypeptide is E3 ubiquitin-protein transferase MAEA (MAEA) (Macaca fascicularis (Crab-eating macaque)).